Consider the following 231-residue polypeptide: Protein OPG061 (231 aa).

This sequence belongs to the orthopoxvirus OPG058 family.

It is found in the host nucleus. It localises to the host nucleolus. In Homo sapiens (Human), this protein is Protein OPG061 (OPG061).